The chain runs to 116 residues: NADH-ubiquinone oxidoreductase chain 3 (116 aa).

Transmembrane regions (helical) follow at residues 3 to 23 (LIMTILTITVALSLILATVSF), 56 to 76 (FFLVAILFLLFDLEIALLLPL), and 87 to 107 (GTFFWATTVLILLTLGLIYEW).

The protein belongs to the complex I subunit 3 family.

The protein localises to the mitochondrion membrane. The enzyme catalyses a ubiquinone + NADH + 5 H(+)(in) = a ubiquinol + NAD(+) + 4 H(+)(out). Functionally, core subunit of the mitochondrial membrane respiratory chain NADH dehydrogenase (Complex I) that is believed to belong to the minimal assembly required for catalysis. Complex I functions in the transfer of electrons from NADH to the respiratory chain. The immediate electron acceptor for the enzyme is believed to be ubiquinone. The protein is NADH-ubiquinone oxidoreductase chain 3 (MT-ND3) of Cyprinus carpio (Common carp).